A 365-amino-acid polypeptide reads, in one-letter code: Histidinol-phosphate aminotransferase (365 aa).

N6-(pyridoxal phosphate)lysine is present on Lys-222.

This sequence belongs to the class-II pyridoxal-phosphate-dependent aminotransferase family. Histidinol-phosphate aminotransferase subfamily. Homodimer. Requires pyridoxal 5'-phosphate as cofactor.

It catalyses the reaction L-histidinol phosphate + 2-oxoglutarate = 3-(imidazol-4-yl)-2-oxopropyl phosphate + L-glutamate. Its pathway is amino-acid biosynthesis; L-histidine biosynthesis; L-histidine from 5-phospho-alpha-D-ribose 1-diphosphate: step 7/9. The polypeptide is Histidinol-phosphate aminotransferase (Geobacillus sp. (strain WCH70)).